The primary structure comprises 364 residues: Adenosine 3'-phospho 5'-phosphosulfate transporter 2 (364 aa).

The next 10 helical transmembrane spans lie at 39-59 (WLQF…YGYM), 74-94 (WTLT…ECII), 106-126 (IYGV…ASVG), 131-151 (PTQV…GILI), 157-177 (GWID…FTLA), 187-206 (SRGY…IGNI), 231-251 (VFIF…PFFL), 257-277 (TFGY…VVLT), 281-301 (VFGA…TIIL), and 310-330 (FTIE…LNLY).

It belongs to the nucleotide-sugar transporter family. SLC35B subfamily.

The protein resides in the golgi apparatus membrane. In terms of biological role, mediates the transport of adenosine 3'-phospho 5'-phosphosulfate (PAPS), from cytosol into Golgi. PAPS is a universal sulfuryl donor for sulfation events that take place in the Golgi. The polypeptide is Adenosine 3'-phospho 5'-phosphosulfate transporter 2 (pst-2) (Caenorhabditis elegans).